Here is a 371-residue protein sequence, read N- to C-terminus: MSGNTLGLLFTVTTFGESHGPAIGAVVDGCPPGMTLSEADIQADLDRRKPGTSRHVTQRKEEDKVEILSGVFEGKTTGAPIGLLIRNTDQRSQDYGDILQTFRPGHADYAYHYKYGFRDPRGGGRSSARLTAPVVAAAAIAKKWLKEHYGTEFYGYMGQLGEIEVPFQDKKHIAENPFFAANSEIIPQLEGYMDELRKAGDSCGARIEVRASNVPIGLGEPLFDKLDADIAHAMMGINAVKGVEIGAGFKSVSQRGSVHGDDLHPDGFASNNSGGTLGGISSGQELRVAIAIKPTSSIMTPKHSVDIKGQPITVQTKGRHDPCVGIRATPIAEAMLALVLMDHALRHRAQCGDVELAVPPIPASRPGSQLD.

Residues Arg48 and Arg54 each contribute to the NADP(+) site. FMN is bound by residues 125-127, 238-239, Gly278, 293-297, and Arg319; these read RSS, NA, and KPTSS.

This sequence belongs to the chorismate synthase family. Homotetramer. FMNH2 is required as a cofactor.

The catalysed reaction is 5-O-(1-carboxyvinyl)-3-phosphoshikimate = chorismate + phosphate. It functions in the pathway metabolic intermediate biosynthesis; chorismate biosynthesis; chorismate from D-erythrose 4-phosphate and phosphoenolpyruvate: step 7/7. In terms of biological role, catalyzes the anti-1,4-elimination of the C-3 phosphate and the C-6 proR hydrogen from 5-enolpyruvylshikimate-3-phosphate (EPSP) to yield chorismate, which is the branch point compound that serves as the starting substrate for the three terminal pathways of aromatic amino acid biosynthesis. This reaction introduces a second double bond into the aromatic ring system. In Polynucleobacter asymbioticus (strain DSM 18221 / CIP 109841 / QLW-P1DMWA-1) (Polynucleobacter necessarius subsp. asymbioticus), this protein is Chorismate synthase.